A 535-amino-acid chain; its full sequence is Light-independent protochlorophyllide reductase subunit B (535 aa).

Aspartate 36 contacts [4Fe-4S] cluster. The Proton donor role is filled by aspartate 292. 428-429 is a binding site for substrate; it reads GL. The segment at 447–483 is disordered; it reads SDDAAKAEPDQPVSNAHGHTESKTVSQGEPIASDEGG.

Belongs to the ChlB/BchB/BchZ family. Protochlorophyllide reductase is composed of three subunits; BchL, BchN and BchB. Forms a heterotetramer of two BchB and two BchN subunits. It depends on [4Fe-4S] cluster as a cofactor.

It carries out the reaction chlorophyllide a + oxidized 2[4Fe-4S]-[ferredoxin] + 2 ADP + 2 phosphate = protochlorophyllide a + reduced 2[4Fe-4S]-[ferredoxin] + 2 ATP + 2 H2O. It functions in the pathway porphyrin-containing compound metabolism; bacteriochlorophyll biosynthesis (light-independent). Its function is as follows. Component of the dark-operative protochlorophyllide reductase (DPOR) that uses Mg-ATP and reduced ferredoxin to reduce ring D of protochlorophyllide (Pchlide) to form chlorophyllide a (Chlide). This reaction is light-independent. The NB-protein (BchN-BchB) is the catalytic component of the complex. The chain is Light-independent protochlorophyllide reductase subunit B from Chlorobium phaeobacteroides (strain DSM 266 / SMG 266 / 2430).